A 477-amino-acid polypeptide reads, in one-letter code: Ankyrin repeat, SAM and basic leucine zipper domain-containing protein 1 (477 aa).

Phosphoserine is present on residues serine 17, serine 18, and serine 20. ANK repeat units lie at residues 46 to 76 (EKKEKFKKALTTGDVSLVLELLDSGIISVDA), 80 to 109 (YGWTPLMYAASVANAELVRVLLDRGANASF), 112 to 146 (DKQTILITACSAHGSEEQILKCVELLLSRNADPNV), 150 to 179 (RLMTPIMYAARDGHTQVVALLVASGAEVNT), 183 to 212 (NGYTALTWAARQGHKSIVLKLLELGANKML), and 216 to 245 (DGKLPSEIAKRNKHHEIFNLLTFTLNPLEG). The SAM domain occupies 274–336 (SYAAFGDLEV…KILAALKELE (63 aa)).

As to quaternary structure, interacts with DDX4, PIWIL1, RANBP9 and TDRD1.

It is found in the cytoplasm. Plays a central role during spermatogenesis by repressing transposable elements and preventing their mobilization, which is essential for the germline integrity. Acts via the piRNA metabolic process, which mediates the repression of transposable elements during meiosis by forming complexes composed of piRNAs and Piwi proteins and governs the methylation and subsequent repression of transposons. Its association with pi-bodies suggests a participation in the primary piRNAs metabolic process. Required prior to the pachytene stage to facilitate the production of multiple types of piRNAs, including those associated with repeats involved in the regulation of retrotransposons. May act by mediating protein-protein interactions during germ cell maturation. The chain is Ankyrin repeat, SAM and basic leucine zipper domain-containing protein 1 (ASZ1) from Callithrix jacchus (White-tufted-ear marmoset).